Consider the following 233-residue polypeptide: Small ribosomal subunit protein uS3 (233 aa).

Residues 39-107 (VRKYLTKELE…PAQINIAEVR (69 aa)) form the KH type-2 domain.

Belongs to the universal ribosomal protein uS3 family. As to quaternary structure, part of the 30S ribosomal subunit. Forms a tight complex with proteins S10 and S14.

Functionally, binds the lower part of the 30S subunit head. Binds mRNA in the 70S ribosome, positioning it for translation. The protein is Small ribosomal subunit protein uS3 of Pectobacterium carotovorum subsp. carotovorum (strain PC1).